The following is a 564-amino-acid chain: Kelch repeat and BTB domain-containing protein 1 (564 aa).

Residues 21 to 88 (CDINIVINDE…IYGIPLSLTN (68 aa)) form the BTB domain. 6 Kelch repeats span residues 252-297 (IELI…VLDN), 298-346 (IIYM…ADDE), 347-395 (YIYC…MLNG), 397-441 (IYVI…VHDG), 442-492 (KIYI…SAHN), and 494-539 (LYVG…CEPI).

It belongs to the poxviruses Kelch family. As to quaternary structure, interacts (via BTB domain) with host CUL3.

It localises to the host cytoplasm. Its function is as follows. Probable substrate-specific adapter of CUL3-containing E3 ubiquitin-protein ligases which mediate the ubiquitination and subsequent proteasomal degradation of host target proteins. The sequence is that of Kelch repeat and BTB domain-containing protein 1 (KBTB1) from Homo sapiens (Human).